The sequence spans 148 residues: Ferredoxin-thioredoxin reductase catalytic chain, chloroplastic (148 aa).

A chloroplast-targeting transit peptide spans 1-35; it reads MKALQASTSYSFFSKSSSATLQRRTHRPQCVILSK. Cys87 serves as a coordination point for [4Fe-4S] cluster. Residue Cys89 is the Nucleophile of the active site. A disulfide bridge links Cys89 with Cys119. [4Fe-4S] cluster is bound by residues Cys106, Cys108, and Cys117.

Belongs to the ferredoxin thioredoxin reductase beta subunit family. Heterodimer of subunit A (variable subunit) and subunit B (catalytic subunit). Heterodimeric FTR forms a complex with ferredoxin and thioredoxin. [4Fe-4S] cluster serves as cofactor.

Its subcellular location is the plastid. The protein localises to the chloroplast. It carries out the reaction [thioredoxin]-disulfide + 2 reduced [2Fe-2S]-[ferredoxin] + 2 H(+) = [thioredoxin]-dithiol + 2 oxidized [2Fe-2S]-[ferredoxin]. Its function is as follows. Catalytic subunit of the ferredoxin-thioredoxin reductase (FTR), which catalyzes the two-electron reduction of thioredoxins by the electrons provided by reduced ferredoxin. The chain is Ferredoxin-thioredoxin reductase catalytic chain, chloroplastic from Spinacia oleracea (Spinach).